Consider the following 338-residue polypeptide: Isopentenyl-diphosphate delta-isomerase (338 aa).

Residue 13–14 coordinates substrate; the sequence is RK. FMN is bound by residues 72-74, S102, and N130; that span reads AMT. 102–104 lines the substrate pocket; sequence SQR. Residue Q165 participates in substrate binding. E166 is a binding site for Mg(2+). FMN-binding positions include K197, T227, 274 to 276, and 295 to 296; these read GIR and AR.

Belongs to the IPP isomerase type 2 family. In terms of assembly, homooctamer. Dimer of tetramers. FMN serves as cofactor. NADPH is required as a cofactor. The cofactor is Mg(2+).

It localises to the cytoplasm. The catalysed reaction is isopentenyl diphosphate = dimethylallyl diphosphate. Involved in the biosynthesis of isoprenoids. Catalyzes the 1,3-allylic rearrangement of the homoallylic substrate isopentenyl (IPP) to its allylic isomer, dimethylallyl diphosphate (DMAPP). This is Isopentenyl-diphosphate delta-isomerase from Deinococcus radiodurans (strain ATCC 13939 / DSM 20539 / JCM 16871 / CCUG 27074 / LMG 4051 / NBRC 15346 / NCIMB 9279 / VKM B-1422 / R1).